The chain runs to 129 residues: Large ribosomal subunit protein uL22 (129 aa).

Belongs to the universal ribosomal protein uL22 family. In terms of assembly, part of the 50S ribosomal subunit.

Its function is as follows. This protein binds specifically to 23S rRNA; its binding is stimulated by other ribosomal proteins, e.g. L4, L17, and L20. It is important during the early stages of 50S assembly. It makes multiple contacts with different domains of the 23S rRNA in the assembled 50S subunit and ribosome. Functionally, the globular domain of the protein is located near the polypeptide exit tunnel on the outside of the subunit, while an extended beta-hairpin is found that lines the wall of the exit tunnel in the center of the 70S ribosome. The polypeptide is Large ribosomal subunit protein uL22 (Brucella abortus (strain 2308)).